The sequence spans 882 residues: Nitrogen regulatory protein areA (882 aa).

The span at 1–13 (MSGLTLGGGGSGG) shows a compositional bias: gly residues. Disordered stretches follow at residues 1–75 (MSGL…PDSL), 139–191 (KRKE…LTSD), 228–257 (SRKD…SEFG), 325–344 (NNHS…FGLD), 394–422 (STDF…EHSM), 461–545 (NQDQ…DMNG), and 579–675 (MDTP…GPTT). The span at 48–59 (SDFSQLSDDFSF) shows a compositional bias: low complexity. Polar residues-rich tracts occupy residues 156-169 (NSVS…QLTS) and 177-191 (PTRQ…LTSD). Residues 325–334 (NNHSSSHHNH) are compositionally biased toward basic residues. Polar residues-rich tracts occupy residues 394–413 (STDF…STPQ) and 492–503 (QVLNPNDFSTGA). Residues 604–613 (VRNREQDPRR) show a composition bias toward basic and acidic residues. The segment covering 617–642 (ARTTSTPNTAQLLRQSMNANTSHTSP) has biased composition (polar residues). A GATA-type zinc finger spans residues 676 to 700 (CTNCFTQTTPLWRRNPEGQPLCNAC). The segment at 723 to 871 (RNRSSANSLA…NHSIAGGQGA (149 aa)) is disordered. Over residues 745-759 (KNSVQQTTVTTPTSS) the composition is skewed to low complexity. Positions 795–811 (NPTTSSPGQSRGTSSVQ) are enriched in polar residues. Residues 848-861 (ALAPAMPPAAANPA) show a composition bias toward low complexity.

The protein localises to the nucleus. Functionally, major nitrogen regulatory protein. Positively acting regulatory gene of nitrogen metabolite repression. In Aspergillus niger, this protein is Nitrogen regulatory protein areA (areA).